We begin with the raw amino-acid sequence, 378 residues long: MSASDNNNSLEKNFAPLKNDRLLRALRFEPIDTTPVWMMRQAGRYLPEYKATRAEAGDFMSLCKDTARATEVTLQPLRRYDLDAAILFSDILTIPDAMGLGLYFEAGEGPKFKHPIRQQADLDRLPVLDVNDSLDYVMRAVTSIRTALNGQVPLFGFSGSPWTLATYMIEGGSSKDYRYTKGFLYSNPEFLHQLLDKLATSVIDYLDAQVVAGAQILQIFDSWGGALGHRQFVDFSHAYNKRIVAELKVRHPEIPVVLFTKGGGLWLDIQADSEADALGLDWTMPIDRARQVLTESQRQLTKQHKKLHSSKAIQGNLDPATLYGSPATIRAEVNAMLDSAYANGEKTGYVANLGHGITQWVNPDNAKVFIDAVHDYKI.

Substrate-binding positions include 40–44, Asp90, Tyr167, Ser222, and His355; that span reads RQAGR.

Belongs to the uroporphyrinogen decarboxylase family. As to quaternary structure, homodimer.

It localises to the cytoplasm. The enzyme catalyses uroporphyrinogen III + 4 H(+) = coproporphyrinogen III + 4 CO2. It participates in porphyrin-containing compound metabolism; protoporphyrin-IX biosynthesis; coproporphyrinogen-III from 5-aminolevulinate: step 4/4. Its function is as follows. Catalyzes the decarboxylation of four acetate groups of uroporphyrinogen-III to yield coproporphyrinogen-III. The chain is Uroporphyrinogen decarboxylase from Psychrobacter arcticus (strain DSM 17307 / VKM B-2377 / 273-4).